Here is a 174-residue protein sequence, read N- to C-terminus: MTNISVIAKPYAKAAFEFANEHNLLQQWSKLLQTFSELIKDKSVAAIVSSPTISQIEVVDALKKQLDENFFNFLALIAENKKMLIMPEIADQFESIKKIHNNVRVADVTLAYATDKNILDSLKTSLEKKFGCTIDMHINIDPAIIGGAVVKVGDTVIDSSVSGHLEKLKSILLS.

Belongs to the ATPase delta chain family. As to quaternary structure, F-type ATPases have 2 components, F(1) - the catalytic core - and F(0) - the membrane proton channel. F(1) has five subunits: alpha(3), beta(3), gamma(1), delta(1), epsilon(1). F(0) has three main subunits: a(1), b(2) and c(10-14). The alpha and beta chains form an alternating ring which encloses part of the gamma chain. F(1) is attached to F(0) by a central stalk formed by the gamma and epsilon chains, while a peripheral stalk is formed by the delta and b chains.

It localises to the cell inner membrane. Its function is as follows. F(1)F(0) ATP synthase produces ATP from ADP in the presence of a proton or sodium gradient. F-type ATPases consist of two structural domains, F(1) containing the extramembraneous catalytic core and F(0) containing the membrane proton channel, linked together by a central stalk and a peripheral stalk. During catalysis, ATP synthesis in the catalytic domain of F(1) is coupled via a rotary mechanism of the central stalk subunits to proton translocation. In terms of biological role, this protein is part of the stalk that links CF(0) to CF(1). It either transmits conformational changes from CF(0) to CF(1) or is implicated in proton conduction. The sequence is that of ATP synthase subunit delta from Francisella tularensis subsp. mediasiatica (strain FSC147).